Here is a 170-residue protein sequence, read N- to C-terminus: Phosphopantetheine adenylyltransferase (170 aa).

Substrate is bound at residue Thr10. Residues 10 to 11 (TF) and His18 each bind ATP. Substrate-binding residues include Lys42, Leu75, and Arg89. ATP contacts are provided by residues 90-92 (GVR), Glu100, and 125-131 (YTYVASS).

Belongs to the bacterial CoaD family. Homohexamer. Mg(2+) serves as cofactor.

It localises to the cytoplasm. It catalyses the reaction (R)-4'-phosphopantetheine + ATP + H(+) = 3'-dephospho-CoA + diphosphate. It functions in the pathway cofactor biosynthesis; coenzyme A biosynthesis; CoA from (R)-pantothenate: step 4/5. In terms of biological role, reversibly transfers an adenylyl group from ATP to 4'-phosphopantetheine, yielding dephospho-CoA (dPCoA) and pyrophosphate. The chain is Phosphopantetheine adenylyltransferase from Chlorobium limicola (strain DSM 245 / NBRC 103803 / 6330).